A 342-amino-acid polypeptide reads, in one-letter code: Flotillin-like protein FloA (342 aa).

2 helical membrane-spanning segments follow: residues 18–38 (FFIF…GKFI) and 39–59 (SLWF…IIGM).

This sequence belongs to the flotillin-like FloA family. Homooligomerizes.

It is found in the cell membrane. The protein resides in the membrane raft. In terms of biological role, found in functional membrane microdomains (FMM) that may be equivalent to eukaryotic membrane rafts. FMMs are highly dynamic and increase in number as cells age. Flotillins are thought to be important factors in membrane fluidity. The protein is Flotillin-like protein FloA of Protochlamydia amoebophila (strain UWE25).